We begin with the raw amino-acid sequence, 150 residues long: MPIWVDADACPIPVKEILYRAAHRAQVVTTLVANQGLRVPPSPFIKTQQVEKGFDVADHVIAQQVKPGDLVITGDIPLASWVIDAGGEALNPRGEIYTRETIKARLGMRNFMEELRSAGVQTGGPAPLNAADKQRFANALDKWLIRGKLS.

The protein belongs to the UPF0178 family.

The sequence is that of UPF0178 protein AHA_0543 from Aeromonas hydrophila subsp. hydrophila (strain ATCC 7966 / DSM 30187 / BCRC 13018 / CCUG 14551 / JCM 1027 / KCTC 2358 / NCIMB 9240 / NCTC 8049).